The primary structure comprises 247 residues: UPF0280 protein MmarC5_0355 (247 aa).

It belongs to the UPF0280 family.

The protein is UPF0280 protein MmarC5_0355 of Methanococcus maripaludis (strain C5 / ATCC BAA-1333).